The sequence spans 414 residues: 3-oxoacyl-[acyl-carrier-protein] synthase 2 (414 aa).

A Ketosynthase family 3 (KS3) domain is found at 3 to 413 (KRRVVVTGMG…GTNGSLIFKR (411 aa)). Catalysis depends on for beta-ketoacyl synthase activity residues cysteine 164, histidine 304, and histidine 342.

The protein belongs to the thiolase-like superfamily. Beta-ketoacyl-ACP synthases family. As to quaternary structure, homodimer.

It carries out the reaction a fatty acyl-[ACP] + malonyl-[ACP] + H(+) = a 3-oxoacyl-[ACP] + holo-[ACP] + CO2. The enzyme catalyses (9Z)-hexadecenoyl-[ACP] + malonyl-[ACP] + H(+) = 3-oxo-(11Z)-octadecenoyl-[ACP] + holo-[ACP] + CO2. The protein operates within lipid metabolism; fatty acid biosynthesis. Its function is as follows. Involved in the type II fatty acid elongation cycle. Catalyzes the elongation of a wide range of acyl-ACP by the addition of two carbons from malonyl-ACP to an acyl acceptor. Can efficiently catalyze the conversion of palmitoleoyl-ACP (cis-hexadec-9-enoyl-ACP) to cis-vaccenoyl-ACP (cis-octadec-11-enoyl-ACP), an essential step in the thermal regulation of fatty acid composition. This chain is 3-oxoacyl-[acyl-carrier-protein] synthase 2 (fabF), found in Vibrio cholerae serotype O1 (strain ATCC 39315 / El Tor Inaba N16961).